Here is a 456-residue protein sequence, read N- to C-terminus: Probable polygalacturonase At3g15720 (456 aa).

The N-terminal stretch at 1-23 is a signal peptide; the sequence is MKKKTWFLNFSLFFLQIFTSSNA. PbH1 repeat units lie at residues 169–195, 196–217, 219–239, 249–270, 278–299, and 314–341; these read CNYVTISSLRINAPESSPNTDGIDVGA, SSNVVIQDCIIATGDDCIAINS, TSNIHISGIDCGPGHGISIGS, VENVCVQNCNFRGTMNGARIKT, ARMITFNGITLDNVENPIIIDQ, and SSAVEVSKVVFSNFIGTSKSEYGVDFRC. The active-site Proton donor is the Asp-210. His-233 is an active-site residue.

This sequence belongs to the glycosyl hydrolase 28 family.

Its subcellular location is the secreted. The protein resides in the cell wall. The enzyme catalyses (1,4-alpha-D-galacturonosyl)n+m + H2O = (1,4-alpha-D-galacturonosyl)n + (1,4-alpha-D-galacturonosyl)m.. The chain is Probable polygalacturonase At3g15720 from Arabidopsis thaliana (Mouse-ear cress).